A 329-amino-acid polypeptide reads, in one-letter code: Putative L-ascorbate peroxidase 6 (329 aa).

The active-site Proton acceptor is the His-123. Heme b is bound at residue His-244.

This sequence belongs to the peroxidase family. Ascorbate peroxidase subfamily. It depends on heme b as a cofactor.

The catalysed reaction is L-ascorbate + H2O2 = L-dehydroascorbate + 2 H2O. In terms of biological role, plays a key role in hydrogen peroxide removal. The sequence is that of Putative L-ascorbate peroxidase 6 (APX6) from Arabidopsis thaliana (Mouse-ear cress).